The primary structure comprises 319 residues: ATP-dependent 6-phosphofructokinase (319 aa).

Glycine 11 serves as a coordination point for ATP. Residue 21–25 (RAVVR) coordinates ADP. Residues 72 to 73 (RC) and 102 to 105 (GDGS) contribute to the ATP site. Aspartate 103 serves as a coordination point for Mg(2+). 125-127 (TID) contacts substrate. The active-site Proton acceptor is aspartate 127. Arginine 154 contributes to the ADP binding site. Residues arginine 162 and 169-171 (MGR) each bind substrate. Residues 185–187 (GAE), arginine 211, and 213–215 (KRH) contribute to the ADP site. Substrate is bound by residues glutamate 222, arginine 243, and 249 to 252 (HVQR).

It belongs to the phosphofructokinase type A (PFKA) family. ATP-dependent PFK group I subfamily. Prokaryotic clade 'B1' sub-subfamily. Homotetramer. It depends on Mg(2+) as a cofactor.

The protein resides in the cytoplasm. The enzyme catalyses beta-D-fructose 6-phosphate + ATP = beta-D-fructose 1,6-bisphosphate + ADP + H(+). It participates in carbohydrate degradation; glycolysis; D-glyceraldehyde 3-phosphate and glycerone phosphate from D-glucose: step 3/4. With respect to regulation, allosterically activated by ADP and other diphosphonucleosides, and allosterically inhibited by phosphoenolpyruvate. Its function is as follows. Catalyzes the phosphorylation of D-fructose 6-phosphate to fructose 1,6-bisphosphate by ATP, the first committing step of glycolysis. This chain is ATP-dependent 6-phosphofructokinase, found in Clostridioides difficile (strain 630) (Peptoclostridium difficile).